The chain runs to 480 residues: MIHNVEKTKLEYGDFQTPLELAEKVCEKLVQLGVNPDIIVEPTCGLGNFIEAASYSFTRAKKIFGIEINSNYLDKIKEKQIFLNDEKFDIRCGDFFQVDWSSIIGQLNKEILIIGNLPWVTNSQQGSIDGENLPIKNNFQNYHGLDAITGKSNFDISEWMLIRLVQCLQKHNGYLAMLCKTSVSRKILNYIHSQKLNLAYSATYKIDTRKYFRVNVDACLFLCKFDLISKNYFCDIFDNIETSKYYRIGYHNNVLIKDLVALKRLKNLYTNKSNIKWRSGIKHDCASVMELQKINDTFINGLGEIVDIEETYLFPLIKGSYVAQNKINATDRYILVTQKIIGEPTDNIRDLAPKTWQYLEKHEKLLDTRKSKIYQNKPRFSIFGVGSYSFSPWKIAICGLYKKLEFRLIGKISEKPTIFDDTVYFLSFEDEEIAFKTVALLNSSLARDFYSSLVFWDEKRPIKSSILNSLDLEVLAKVIL.

Belongs to the methyltransferase superfamily.

Its function is as follows. A gamma subtype methylase that recognizes the double-stranded sequence 5'-TTCGAA-3', and methylates it on an unknown base to protect it against the NspV endonuclease. The chain is Type II methyltransferase M.NspV from Nostoc sp. (strain ATCC 29411 / PCC 7524).